Here is a 556-residue protein sequence, read N- to C-terminus: MWKWAGVVVMVWSSYGTAICPAWSHAKAEQEIAGLNAQISRWNDAYWQEGKSDVSDEIYDQLNTRLKQWQQCFNHEPATEDIPPANGTLRHPFAHTGVHKVSGKEELRQWMHSRRDLWVQPKVDGVAVTLVYRKGKLVQAISRGDGVKGEDWTARVQAIPSVPLNVKGVLSESVLQGEIFLRCERHIQQQMGGMNARAKVAGMMMRQNNKTVLENLGVFIWAWPDGPQSMPQRLSELTKAGFTLTAQYTRAVSTADEVEKNRKEWLTSSLPFVTDGIVVRSSIEPVGEQWLPGEGDWVVAWKYSPVSQVAEVNAIQFAIGRTGKISVVAVLESIQLDDKRVKRVNLGSVSRWQALDIAPGDQILVSLAGQGIPRVDKVVWRGNDRKKPAPPASQYHSLTCFYASPECLEQFFARLVWLSSKQILNMEGLGDSSWRLLHQTYHFEHIFSWLAVTQEQIEKTSGLNPARRLQLWHRFELARHHPFKKWIKALGIPLPQAAADALSVHSWRQLQDKDAVSWNQLPGIGTEKARKLVEFVHDSQITRLATWLGEQGIDGF.

Catalysis depends on Lys122, which acts as the N6-AMP-lysine intermediate.

This sequence belongs to the NAD-dependent DNA ligase family. LigB subfamily.

The catalysed reaction is NAD(+) + (deoxyribonucleotide)n-3'-hydroxyl + 5'-phospho-(deoxyribonucleotide)m = (deoxyribonucleotide)n+m + AMP + beta-nicotinamide D-nucleotide.. Functionally, catalyzes the formation of phosphodiester linkages between 5'-phosphoryl and 3'-hydroxyl groups in double-stranded DNA using NAD as a coenzyme and as the energy source for the reaction. The polypeptide is DNA ligase B (Enterobacter sp. (strain 638)).